Here is a 190-residue protein sequence, read N- to C-terminus: NADH-quinone oxidoreductase subunit B (190 aa).

[4Fe-4S] cluster-binding residues include cysteine 39, cysteine 40, cysteine 104, and cysteine 135.

This sequence belongs to the complex I 20 kDa subunit family. In terms of assembly, NDH-1 is composed of 14 different subunits. Subunits NuoB, C, D, E, F, and G constitute the peripheral sector of the complex. [4Fe-4S] cluster serves as cofactor.

The protein localises to the cell inner membrane. The catalysed reaction is a quinone + NADH + 5 H(+)(in) = a quinol + NAD(+) + 4 H(+)(out). NDH-1 shuttles electrons from NADH, via FMN and iron-sulfur (Fe-S) centers, to quinones in the respiratory chain. The immediate electron acceptor for the enzyme in this species is believed to be a menaquinone. Couples the redox reaction to proton translocation (for every two electrons transferred, four hydrogen ions are translocated across the cytoplasmic membrane), and thus conserves the redox energy in a proton gradient. This chain is NADH-quinone oxidoreductase subunit B, found in Chlorobium phaeobacteroides (strain BS1).